Reading from the N-terminus, the 86-residue chain is Large ribosomal subunit protein uL23 (86 aa).

This sequence belongs to the universal ribosomal protein uL23 family. In terms of assembly, part of the 50S ribosomal subunit. Contacts protein L29.

Functionally, binds to 23S rRNA. One of the proteins that surrounds the polypeptide exit tunnel on the outside of the ribosome. This Methanococcus vannielii (strain ATCC 35089 / DSM 1224 / JCM 13029 / OCM 148 / SB) protein is Large ribosomal subunit protein uL23.